Consider the following 312-residue polypeptide: HTH-type transcriptional regulator PtxR (312 aa).

The 58-residue stretch at 11–68 folds into the HTH lysR-type domain; the sequence is LNLNHLYAFVAVAEHNSFTAAAEALGLSKSLLSEQLRRLEADLGIQLLTRTTRRMTLT. Positions 28–47 form a DNA-binding region, H-T-H motif; sequence FTAAAEALGLSKSLLSEQLR.

It belongs to the LysR transcriptional regulatory family. In terms of assembly, monomer in solution. May dimerize on binding to DNA. Interacts with PtxS in the absence of 2-ketogluconate. Binding of the 2-ketogluconate effector to PtxS causes PtxS/PtxR complex dissociation.

Its activity is regulated as follows. Negatively regulated by PtxS, which interacts with PtxR and prevents its activity. Plays an important role in the regulation of the production of the virulence factor exotoxin A (toxA), via positive regulation of the transcription of the toxA gene. Acts by binding directly to the toxA promoter region. Besides toxA, PtxR modulates the expression of genes that code for the QS-controlled virulence factors. It negatively regulates the expression of the rhamnolipid and pyocyanine genes, through the autoinducer synthase RhlI, and the PQS synthesis operon pqsABCDE, while it positively regulates the expression of lasB through the autoinducer synthase LasI. Also positively regulates the expression of the exotoxin A regulatory protein (toxR or regA). Its function is as follows. In addition, is involved in the positive regulation of glucose metabolism via the regulation of the expression of the kgu and gad operons. Acts by binding directly to the promoter region of the kgu and gad operons. This Pseudomonas aeruginosa (strain ATCC 15692 / DSM 22644 / CIP 104116 / JCM 14847 / LMG 12228 / 1C / PRS 101 / PAO1) protein is HTH-type transcriptional regulator PtxR.